The following is a 131-amino-acid chain: MPTAKFVVADPKTGRCYQIEADNTPLVGKKIGEVFDGKIIGLEGYKLQIRGGTDSSGFPMRPDIHGSRKVRVLLSAPPGFKPKRKGERRRKTVRGNTIAPDIVQINVKVVEYGEKSIPELLGLEGGENQEQ.

Positions 76-95 (APPGFKPKRKGERRRKTVRG) are disordered. A compositionally biased stretch (basic residues) spans 81–93 (KPKRKGERRRKTV).

This sequence belongs to the eukaryotic ribosomal protein eS6 family.

This chain is Small ribosomal subunit protein eS6, found in Methanocaldococcus jannaschii (strain ATCC 43067 / DSM 2661 / JAL-1 / JCM 10045 / NBRC 100440) (Methanococcus jannaschii).